The following is a 213-amino-acid chain: Hemolysin-3 homolog (213 aa).

Helical transmembrane passes span 11 to 31 (AITH…LIIF), 41 to 61 (IVSF…STLL), 75 to 95 (IIDH…FLLG), 103 to 123 (FTLL…KIFF), 127 to 147 (FILL…IAVK), 157 to 177 (GFSL…FYIW), and 185 to 205 (AIWH…VLFY).

Belongs to the UPF0073 (Hly-III) family.

It localises to the cell membrane. The polypeptide is Hemolysin-3 homolog (yplQ) (Bacillus subtilis (strain 168)).